A 383-amino-acid polypeptide reads, in one-letter code: 8-amino-7-oxononanoate synthase (383 aa).

Arginine 21 is a binding site for substrate. 108 to 109 (GY) contacts pyridoxal 5'-phosphate. A substrate-binding site is contributed by histidine 133. Pyridoxal 5'-phosphate-binding residues include serine 179, histidine 207, and threonine 233. Lysine 236 bears the N6-(pyridoxal phosphate)lysine mark. Threonine 350 contributes to the substrate binding site.

Belongs to the class-II pyridoxal-phosphate-dependent aminotransferase family. BioF subfamily. In terms of assembly, homodimer. Requires pyridoxal 5'-phosphate as cofactor.

It catalyses the reaction 6-carboxyhexanoyl-[ACP] + L-alanine + H(+) = (8S)-8-amino-7-oxononanoate + holo-[ACP] + CO2. It functions in the pathway cofactor biosynthesis; biotin biosynthesis. Its function is as follows. Catalyzes the decarboxylative condensation of pimeloyl-[acyl-carrier protein] and L-alanine to produce 8-amino-7-oxononanoate (AON), [acyl-carrier protein], and carbon dioxide. The sequence is that of 8-amino-7-oxononanoate synthase from Photorhabdus laumondii subsp. laumondii (strain DSM 15139 / CIP 105565 / TT01) (Photorhabdus luminescens subsp. laumondii).